Consider the following 595-residue polypeptide: Estrogen receptor (595 aa).

Residues 1–184 form a modulating(transactivation AF-1); mediates interaction with MACROD1 region; it reads MTMTLHTKAS…AMESVKETRY (184 aa). O-linked (GlcNAc) serine glycosylation occurs at Ser-10. The tract at residues 35 to 47 is required for interaction with NCOA1; that stretch reads LERALSEVYVDSS. The segment at 35-174 is interaction with DDX5; self-association; the sequence is LERALSEVYV…LSSSSEKGSM (140 aa). Residues Ser-103 and Ser-105 each carry the phosphoserine; by CDK2 modification. The residue at position 118 (Ser-118) is a Phosphoserine. The tract at residues 143 to 174 is disordered; that stretch reads DSGPPAFYRSNSDNRRQSGRERLSSSSEKGSM. The segment covering 154–165 has biased composition (basic and acidic residues); it reads SDNRRQSGRERL. At Ser-167 the chain carries Phosphoserine; by CK2. NR C4-type zinc fingers lie at residues 185 to 205 and 221 to 245; these read CAVC…CEGC and CPAT…LRKC. Positions 185 to 250 form a DNA-binding region, nuclear receptor; the sequence is CAVCNDYASG…RLRKCYEVGM (66 aa). A mediates interaction with DNTTIP2 region spans residues 185-310; the sequence is CAVCNDYASG…TKKNSPALSL (126 aa). Residues 251 to 310 are hinge; it reads MKGGIRKDRRGGRMLKHKRQRDDLEGRNDMGPSGDMRATNLWPSPLVIKHTKKNSPALSL. Position 260 is an asymmetric dimethylarginine; by PRMT1 (Arg-260). Positions 260–269 are enriched in basic residues; sequence RGGRMLKHKR. The disordered stretch occupies residues 260 to 285; sequence RGGRMLKHKRQRDDLEGRNDMGPSGD. The tract at residues 262–595 is interaction with AKAP13; that stretch reads GRMLKHKRQR…SEAESFPNTI (334 aa). The tract at residues 264–595 is self-association; that stretch reads MLKHKRQRDD…SEAESFPNTI (332 aa). An NR LBD domain is found at 311–547; it reads TADQMVSALL…DLLLEMLDAH (237 aa). Residues 311–595 form a transactivation AF-2 region; sequence TADQMVSALL…SEAESFPNTI (285 aa). Glu-353 and Arg-394 together coordinate 17beta-estradiol. Cys-447 carries S-palmitoyl cysteine lipidation. His-524 is a 17beta-estradiol binding site. Tyr-537 carries the phosphotyrosine; by Tyr-kinases modification. The tract at residues 554–578 is disordered; it reads SRMGVSPEEPSQSQLTTTNSTSSHS. The segment covering 564 to 578 has biased composition (low complexity); the sequence is SQSQLTTTNSTSSHS. O-linked (GlcNAc) threonine glycosylation is present at Thr-571.

This sequence belongs to the nuclear hormone receptor family. NR3 subfamily. Binds DNA as a homodimer. Can form a heterodimer with ESR2. Interacts with coactivator NCOA5. Interacts with PELP1, the interaction is enhanced by 17-beta-estradiol; the interaction increases ESR1 transcriptional activity. Interacts with NCOA7; the interaction is ligand-inducible. Interacts with AKAP13, CUEDC2, HEXIM1, KDM5A, MAP1S, SMARD1, and UBE1C. Interacts with MUC1; the interaction is stimulated by 7 beta-estradiol (E2) and enhances ESR1-mediated transcription. Interacts with DNTTIP2, and UIMC1. Interacts with KMT2D/MLL2. Interacts with ATAD2; the interaction is enhanced by estradiol. Interacts with KIF18A and LDB1. Interacts with RLIM (via its C-terminus). Interacts with MACROD1. Interacts with SH2D4A and PLCG. Interacts with SH2D4A; the interaction blocks binding to PLCG and inhibits estrogen-induced cell proliferation. Interacts with DYNLL1. Interacts with CCDC62; the interaction requires estradiol and appears to enhance the transcription of target genes. Interacts with NR2C1; the interaction prevents homodimerization of ESR1 and suppresses its transcriptional activity and cell growth. Interacts with DNAAF4. Interacts with PRMT2. Interacts with RBFOX2. Interacts with EP300; the interaction is estrogen-dependent and enhanced by CITED1. Interacts with CITED1; the interaction is estrogen-dependent. Interacts with FAM120B, FOXL2, PHB2 and SLC30A9. Interacts with coactivators NCOA3 and NCOA6. Interacts with STK3/MST2 only in the presence of SAV1 and vice-versa. Binds to CSNK1D. Interacts with NCOA2; NCOA2 can interact with ESR1 AF-1 and AF-2 domains simultaneously and mediate their transcriptional synergy. Interacts with DDX5. Interacts with NCOA1; the interaction seems to require a self-association of N-terminal and C-terminal regions. Interacts with ZNF366, DDX17, NFKB1, RELA, SP1 and SP3. Interacts with NRIP1. Interacts with GPER1; the interaction occurs in an estrogen-dependent manner. Interacts with CLOCK and the interaction is stimulated by estrogen. Interacts with TRIP4 (ufmylated); estrogen dependent. Interacts with LMTK3; the interaction phosphorylates ESR1 (in vitro) and protects it against proteasomal degradation. Interacts with CCAR2 (via N-terminus) in a ligand-independent manner. Interacts with ZFHX3. Interacts with SFR1 in a ligand-dependent and -independent manner. Interacts with DCAF13, LATS1 and DCAF1; regulates ESR1 ubiquitination and ubiquitin-mediated proteasomal degradation. Interacts (via DNA-binding domain) with POU4F2 (C-terminus); this interaction increases the estrogen receptor ESR1 transcriptional activity in a DNA- and ligand 17-beta-estradiol-independent manner. Interacts with ESRRB isoform 1. Interacts with UBE3A and WBP2. Interacts with GTF2B. Interacts with RBM39. In the absence of hormonal ligand, interacts with TACC1. Interacts with PI3KR1 or PI3KR2 and PTK2/FAK1. Interacts with SRC. Interacts with BAG1; the interaction is promoted in the absence of estradiol (17-beta-estradiol/E2). Interacts with and ubiquitinated by STUB1; the interaction is promoted in the absence of estradiol (17-beta-estradiol/E2). Interacts with NEDD8. Ubiquitinated; regulated by LATS1 via DCAF1 it leads to ESR1 proteasomal degradation. Deubiquitinated by OTUB1. Ubiquitinated by STUB1/CHIP; in the CA1 hippocampal region following loss of endogenous circulating estradiol (17-beta-estradiol/E2). Ubiquitinated by UBR5, leading to its degradation: UBR5 specifically recognizes and binds ligand-bound ESR1 when it is not associated with coactivators (NCOAs). In presence of NCOAs, the UBR5-degron is not accessible, preventing its ubiquitination and degradation. Post-translationally, phosphorylated by cyclin A/CDK2 and CK1. Phosphorylation probably enhances transcriptional activity. Dephosphorylation at Ser-118 by PPP5C inhibits its transactivation activity. Phosphorylated by LMTK3 (in vitro). In terms of processing, palmitoylated at Cys-447 by ZDHHC7 and ZDHHC21. Palmitoylation is required for plasma membrane targeting and for rapid intracellular signaling via ERK and AKT kinases and cAMP generation, but not for signaling mediated by the nuclear hormone receptor. Dimethylated by PRMT1 at Arg-260. The methylation may favor cytoplasmic localization. Demethylated by JMJD6 at Arg-260.

It is found in the nucleus. The protein resides in the cytoplasm. The protein localises to the golgi apparatus. Its subcellular location is the cell membrane. In terms of biological role, nuclear hormone receptor. The steroid hormones and their receptors are involved in the regulation of eukaryotic gene expression and affect cellular proliferation and differentiation in target tissues. Ligand-dependent nuclear transactivation involves either direct homodimer binding to a palindromic estrogen response element (ERE) sequence or association with other DNA-binding transcription factors, such as AP-1/c-Jun, c-Fos, ATF-2, Sp1 and Sp3, to mediate ERE-independent signaling. Ligand binding induces a conformational change allowing subsequent or combinatorial association with multiprotein coactivator complexes through LXXLL motifs of their respective components. Mutual transrepression occurs between the estrogen receptor (ER) and NF-kappa-B in a cell-type specific manner. Decreases NF-kappa-B DNA-binding activity and inhibits NF-kappa-B-mediated transcription from the IL6 promoter and displace RELA/p65 and associated coregulators from the promoter. Recruited to the NF-kappa-B response element of the CCL2 and IL8 promoters and can displace CREBBP. Present with NF-kappa-B components RELA/p65 and NFKB1/p50 on ERE sequences. Can also act synergistically with NF-kappa-B to activate transcription involving respective recruitment adjacent response elements; the function involves CREBBP. Can activate the transcriptional activity of TFF1. Also mediates membrane-initiated estrogen signaling involving various kinase cascades. Essential for MTA1-mediated transcriptional regulation of BRCA1 and BCAS3. Maintains neuronal survival in response to ischemic reperfusion injury when in the presence of circulating estradiol (17-beta-estradiol/E2). The polypeptide is Estrogen receptor (ESR1) (Mesocricetus auratus (Golden hamster)).